Reading from the N-terminus, the 355-residue chain is MTELKNDRYLRALLKEPVDCTPVWMMRQAGRYLPEYKATRAQAGDFMSLCKNAELASEVTLQPLRRFPLDAAILFSDILTIPDAMGLGLRFSTGEGPIFDNPITCKADVEKIGVPDPEGELQYVMNAVRQIRKDLNGDVPLIGFSGSPWTLATYMVEGGSSKAFTKIKKMMYAEPQTLHLLLDKLADSVIEYLNAQIKAGAQSVMVFDTWGGVLTPRDYNLFSLQYMHKIVDGLIRENDGRRVPVTLFTKNGGMWLEQIAATGCDAVGLDWTINIADAKARVGDKVALQGNMDPSMLYASHDRIREEVASILEGFGHGGTGHVFNLGHGIHLDVPPENAGVFVEAVHELSKPYHQ.

Residues 27 to 31 (RQAGR), F46, D77, Y154, T209, and H328 contribute to the substrate site.

The protein belongs to the uroporphyrinogen decarboxylase family. In terms of assembly, homodimer.

It is found in the cytoplasm. It catalyses the reaction uroporphyrinogen III + 4 H(+) = coproporphyrinogen III + 4 CO2. It participates in porphyrin-containing compound metabolism; protoporphyrin-IX biosynthesis; coproporphyrinogen-III from 5-aminolevulinate: step 4/4. In terms of biological role, catalyzes the decarboxylation of four acetate groups of uroporphyrinogen-III to yield coproporphyrinogen-III. This Vibrio vulnificus (strain CMCP6) protein is Uroporphyrinogen decarboxylase.